The following is a 476-amino-acid chain: Aspartyl/glutamyl-tRNA(Asn/Gln) amidotransferase subunit B (476 aa).

Belongs to the GatB/GatE family. GatB subfamily. Heterotrimer of A, B and C subunits.

The catalysed reaction is L-glutamyl-tRNA(Gln) + L-glutamine + ATP + H2O = L-glutaminyl-tRNA(Gln) + L-glutamate + ADP + phosphate + H(+). The enzyme catalyses L-aspartyl-tRNA(Asn) + L-glutamine + ATP + H2O = L-asparaginyl-tRNA(Asn) + L-glutamate + ADP + phosphate + 2 H(+). In terms of biological role, allows the formation of correctly charged Asn-tRNA(Asn) or Gln-tRNA(Gln) through the transamidation of misacylated Asp-tRNA(Asn) or Glu-tRNA(Gln) in organisms which lack either or both of asparaginyl-tRNA or glutaminyl-tRNA synthetases. The reaction takes place in the presence of glutamine and ATP through an activated phospho-Asp-tRNA(Asn) or phospho-Glu-tRNA(Gln). This is Aspartyl/glutamyl-tRNA(Asn/Gln) amidotransferase subunit B from Lacticaseibacillus casei (strain BL23) (Lactobacillus casei).